The sequence spans 85 residues: Translation initiation factor IF-1 2 (85 aa).

Positions 1–72 (MAKEELIEMH…SKGRITFRHI (72 aa)) constitute an S1-like domain.

Belongs to the IF-1 family. Component of the 30S ribosomal translation pre-initiation complex which assembles on the 30S ribosome in the order IF-2 and IF-3, IF-1 and N-formylmethionyl-tRNA(fMet); mRNA recruitment can occur at any time during PIC assembly.

The protein localises to the cytoplasm. Its function is as follows. One of the essential components for the initiation of protein synthesis. Stabilizes the binding of IF-2 and IF-3 on the 30S subunit to which N-formylmethionyl-tRNA(fMet) subsequently binds. Helps modulate mRNA selection, yielding the 30S pre-initiation complex (PIC). Upon addition of the 50S ribosomal subunit IF-1, IF-2 and IF-3 are released leaving the mature 70S translation initiation complex. This is Translation initiation factor IF-1 2 from Polaromonas sp. (strain JS666 / ATCC BAA-500).